Reading from the N-terminus, the 135-residue chain is Histone H2A (135 aa).

This sequence belongs to the histone H2A family. In terms of assembly, the nucleosome is a histone octamer containing two molecules each of H2A, H2B, H3 and H4 assembled in one H3-H4 heterotetramer and two H2A-H2B heterodimers. The octamer wraps approximately 147 bp of DNA.

The protein localises to the nucleus. Its subcellular location is the chromosome. Functionally, core component of nucleosome. Nucleosomes wrap and compact DNA into chromatin, limiting DNA accessibility to the cellular machineries which require DNA as a template. Histones thereby play a central role in transcription regulation, DNA repair, DNA replication and chromosomal stability. DNA accessibility is regulated via a complex set of post-translational modifications of histones, also called histone code, and nucleosome remodeling. The protein is Histone H2A of Trypanosoma cruzi.